Here is a 172-residue protein sequence, read N- to C-terminus: NADH-quinone oxidoreductase subunit B (172 aa).

Positions 46, 47, 111, and 141 each coordinate [4Fe-4S] cluster.

This sequence belongs to the complex I 20 kDa subunit family. In terms of assembly, NDH-1 is composed of 14 different subunits. Subunits NuoB, C, D, E, F, and G constitute the peripheral sector of the complex. [4Fe-4S] cluster serves as cofactor.

It localises to the cell membrane. It catalyses the reaction a quinone + NADH + 5 H(+)(in) = a quinol + NAD(+) + 4 H(+)(out). Its function is as follows. NDH-1 shuttles electrons from NADH, via FMN and iron-sulfur (Fe-S) centers, to quinones in the respiratory chain. The immediate electron acceptor for the enzyme in this species is believed to be a menaquinone. Couples the redox reaction to proton translocation (for every two electrons transferred, four hydrogen ions are translocated across the cytoplasmic membrane), and thus conserves the redox energy in a proton gradient. The protein is NADH-quinone oxidoreductase subunit B of Brevibacillus brevis (strain 47 / JCM 6285 / NBRC 100599).